We begin with the raw amino-acid sequence, 437 residues long: MNRSRSESLFQKAQSLIVGGVNSPSRSFKAVGGGAPVFMEKAKGAYFWDVDGNQYIDYLAAYGPIITGHAHPHITNAIQRAAENGVLYGTPTKLENQFASMLQQAIPSLEKVRFVNSGTEAVMTTIRVARAYTGRDKIIKFAGCYHGHSDLVLVAAGSGPSTLGTPDSAGVTKNIAEEVITVPFNQLDSLKEALDHWGEEVAAVLVEPIVGNFGIVEPHEGFLEGVNELAHNAGALVIYDEVITAFRFMYEGAQNYVGVEPDMTALGKIIGGGLPIGAYGGRIDIMEKVAPLGPAYQAGTMAGNPASMSAGIACLEVLQEEGLYDELDRKGAILEKGIKAHAEAHGITISINRLKGALTVYFTDETVTCYEQAERSDGEKFSLFFKEMLNQGINLAPSKYEAWFLTIAHTDEDIEKTLQAVDHAFSVMAAKGYHLKR.

Lys-268 is modified (N6-(pyridoxal phosphate)lysine).

It belongs to the class-III pyridoxal-phosphate-dependent aminotransferase family. HemL subfamily. In terms of assembly, homodimer. The cofactor is pyridoxal 5'-phosphate.

The protein localises to the cytoplasm. The enzyme catalyses (S)-4-amino-5-oxopentanoate = 5-aminolevulinate. It functions in the pathway porphyrin-containing compound metabolism; protoporphyrin-IX biosynthesis; 5-aminolevulinate from L-glutamyl-tRNA(Glu): step 2/2. The polypeptide is Glutamate-1-semialdehyde 2,1-aminomutase 1 (Halalkalibacterium halodurans (strain ATCC BAA-125 / DSM 18197 / FERM 7344 / JCM 9153 / C-125) (Bacillus halodurans)).